The primary structure comprises 311 residues: Olfactory receptor-like protein OLF1 (311 aa).

Residues 1-24 (MDGNYTLVTEFILLGFPTRPELQI) are Extracellular-facing. Asn4 carries an N-linked (GlcNAc...) asparagine glycan. The chain crosses the membrane as a helical span at residues 25-48 (VLFLVFLTLYGIILTGNIGLMMLI). Residues 49-56 (RTDPHLQT) lie on the Cytoplasmic side of the membrane. Residues 57 to 78 (PMYFFLSNLSFADLCFSSAIVP) form a helical membrane-spanning segment. Residues 79 to 99 (KMLVNFLSENKSISLYGCALQ) lie on the Extracellular side of the membrane. Residues 100-119 (FYFSCAFADTESFILAAMAY) traverse the membrane as a helical segment. The Cytoplasmic segment spans residues 120-138 (DRYVAICNPLLYTVVMSRG). Residues 139-157 (ICVWLIVLSYIGGNMSSLV) form a helical membrane-spanning segment. At 158-195 (HTSFAFILKYCDKNVINHFFCDLPPLLKLSCTDTSVNE) the chain is on the extracellular side. Residues 196-218 (WLLSTYGSSVEIFCFIVIVISYY) traverse the membrane as a helical segment. Residues 219 to 235 (FILRSVLRIRSSSGRKK) lie on the Cytoplasmic side of the membrane. Residues 236–259 (TFSTCASHLTSVAIYQGTLLFIYS) form a helical membrane-spanning segment. Over 260 to 271 (RPTYLYTPNTDK) the chain is Extracellular. Residues 272–291 (IISVFYTIIIPVLNPLIYSL) traverse the membrane as a helical segment. Residues 292–311 (RNKDVKDAAKRAVRLKVDSS) lie on the Cytoplasmic side of the membrane.

It belongs to the G-protein coupled receptor 1 family.

It localises to the cell membrane. Its function is as follows. Putative odorant or sperm cell receptor. In Canis lupus familiaris (Dog), this protein is Olfactory receptor-like protein OLF1.